Consider the following 347-residue polypeptide: NADH-ubiquinone oxidoreductase chain 2 (347 aa).

11 helical membrane-spanning segments follow: residues methionine 1–alanine 21, histidine 25–threonine 45, alanine 55–leucine 75, threonine 96–proline 116, threonine 123–tyrosine 143, isoleucine 145–glycine 165, isoleucine 178–proline 198, isoleucine 200–asparagine 220, leucine 237–leucine 257, glycine 274–methionine 294, and phenylalanine 324–phenylalanine 344.

It belongs to the complex I subunit 2 family. In terms of assembly, core subunit of respiratory chain NADH dehydrogenase (Complex I) which is composed of 45 different subunits. Interacts with TMEM242.

It localises to the mitochondrion inner membrane. The enzyme catalyses a ubiquinone + NADH + 5 H(+)(in) = a ubiquinol + NAD(+) + 4 H(+)(out). In terms of biological role, core subunit of the mitochondrial membrane respiratory chain NADH dehydrogenase (Complex I) which catalyzes electron transfer from NADH through the respiratory chain, using ubiquinone as an electron acceptor. Essential for the catalytic activity and assembly of complex I. This is NADH-ubiquinone oxidoreductase chain 2 from Hylobates lar (Lar gibbon).